A 436-amino-acid polypeptide reads, in one-letter code: tRNA-2-methylthio-N(6)-dimethylallyladenosine synthase (436 aa).

Residues 5–121 enclose the MTTase N-terminal domain; the sequence is RKLFIKTYGC…LPDMLERTEG (117 aa). 6 residues coordinate [4Fe-4S] cluster: Cys-14, Cys-50, Cys-84, Cys-158, Cys-162, and Cys-165. One can recognise a Radical SAM core domain in the interval 144 to 374; the sequence is ATRGPAAFLT…TEQQRAAQMA (231 aa). One can recognise a TRAM domain in the interval 373 to 435; that stretch reads MAMVGREVGV…PNSLAGERLG (63 aa).

The protein belongs to the methylthiotransferase family. MiaB subfamily. As to quaternary structure, monomer. Requires [4Fe-4S] cluster as cofactor.

It localises to the cytoplasm. The enzyme catalyses N(6)-dimethylallyladenosine(37) in tRNA + (sulfur carrier)-SH + AH2 + 2 S-adenosyl-L-methionine = 2-methylsulfanyl-N(6)-dimethylallyladenosine(37) in tRNA + (sulfur carrier)-H + 5'-deoxyadenosine + L-methionine + A + S-adenosyl-L-homocysteine + 2 H(+). Its function is as follows. Catalyzes the methylthiolation of N6-(dimethylallyl)adenosine (i(6)A), leading to the formation of 2-methylthio-N6-(dimethylallyl)adenosine (ms(2)i(6)A) at position 37 in tRNAs that read codons beginning with uridine. In Cereibacter sphaeroides (strain ATCC 17023 / DSM 158 / JCM 6121 / CCUG 31486 / LMG 2827 / NBRC 12203 / NCIMB 8253 / ATH 2.4.1.) (Rhodobacter sphaeroides), this protein is tRNA-2-methylthio-N(6)-dimethylallyladenosine synthase.